A 595-amino-acid polypeptide reads, in one-letter code: Ketol-acid reductoisomerase, chloroplastic (595 aa).

A chloroplast-targeting transit peptide spans 1 to 72 (MAATAATTFS…GGGSALSAQM (72 aa)). The KARI N-terminal Rossmann domain maps to 108–306 (VRGGRNLFPL…ALGSPFTFAT (199 aa)). Residues 129–136 (GVIGWGSQ), 162–167 (RKGSNS), and 201–205 (SDSAQ) contribute to the NADP(+) site. The active site involves H226. KARI C-terminal knotted domains follow at residues 307-455 (TLEQ…RPAG) and 456-592 (DLGP…RPEL). D315, E319, E492, and E496 together coordinate Mg(2+). S518 lines the substrate pocket.

This sequence belongs to the ketol-acid reductoisomerase family. In terms of assembly, homodimer. Requires Mg(2+) as cofactor.

The protein localises to the plastid. It is found in the chloroplast. It carries out the reaction (2R)-2,3-dihydroxy-3-methylbutanoate + NADP(+) = (2S)-2-acetolactate + NADPH + H(+). The enzyme catalyses (2R,3R)-2,3-dihydroxy-3-methylpentanoate + NADP(+) = (S)-2-ethyl-2-hydroxy-3-oxobutanoate + NADPH + H(+). The protein operates within amino-acid biosynthesis; L-isoleucine biosynthesis; L-isoleucine from 2-oxobutanoate: step 2/4. It participates in amino-acid biosynthesis; L-valine biosynthesis; L-valine from pyruvate: step 2/4. The protein is Ketol-acid reductoisomerase, chloroplastic (AHRI) of Spinacia oleracea (Spinach).